We begin with the raw amino-acid sequence, 415 residues long: Calcium/calmodulin-dependent serine/threonine-protein kinase (415 aa).

One can recognise a Protein kinase domain in the interval 12-308 (YEISEILGRG…AQELLDHPWV (297 aa)). Residues 18–26 (LGRGGFSVV) and K46 contribute to the ATP site. D173 (proton acceptor) is an active-site residue. The tract at residues 318–328 (MDAEIVSRLQS) is calmodulin-binding.

It belongs to the protein kinase superfamily. CAMK Ser/Thr protein kinase family. CaMK subfamily.

The enzyme catalyses L-seryl-[protein] + ATP = O-phospho-L-seryl-[protein] + ADP + H(+). The catalysed reaction is L-threonyl-[protein] + ATP = O-phospho-L-threonyl-[protein] + ADP + H(+). In terms of biological role, may be involved in signal transduction processes. The polypeptide is Calcium/calmodulin-dependent serine/threonine-protein kinase (Malus domestica (Apple)).